The following is a 672-amino-acid chain: DNA-directed RNA polymerase subunit gamma (672 aa).

Residues C70, C72, C85, and C88 each coordinate Zn(2+). Mg(2+) is bound by residues D466, D468, and D470.

This sequence belongs to the RNA polymerase beta' chain family. RpoC1 subfamily. In cyanobacteria the RNAP catalytic core is composed of 2 alpha, 1 beta, 1 beta', 1 gamma and 1 omega subunit. When a sigma factor is associated with the core the holoenzyme is formed, which can initiate transcription. Requires Mg(2+) as cofactor. Zn(2+) is required as a cofactor.

The catalysed reaction is RNA(n) + a ribonucleoside 5'-triphosphate = RNA(n+1) + diphosphate. In terms of biological role, DNA-dependent RNA polymerase catalyzes the transcription of DNA into RNA using the four ribonucleoside triphosphates as substrates. This chain is DNA-directed RNA polymerase subunit gamma, found in Trichodesmium erythraeum (strain IMS101).